The sequence spans 475 residues: Aspartyl/glutamyl-tRNA(Asn/Gln) amidotransferase subunit B (475 aa).

The protein belongs to the GatB/GatE family. GatB subfamily. Heterotrimer of A, B and C subunits.

It carries out the reaction L-glutamyl-tRNA(Gln) + L-glutamine + ATP + H2O = L-glutaminyl-tRNA(Gln) + L-glutamate + ADP + phosphate + H(+). The enzyme catalyses L-aspartyl-tRNA(Asn) + L-glutamine + ATP + H2O = L-asparaginyl-tRNA(Asn) + L-glutamate + ADP + phosphate + 2 H(+). Functionally, allows the formation of correctly charged Asn-tRNA(Asn) or Gln-tRNA(Gln) through the transamidation of misacylated Asp-tRNA(Asn) or Glu-tRNA(Gln) in organisms which lack either or both of asparaginyl-tRNA or glutaminyl-tRNA synthetases. The reaction takes place in the presence of glutamine and ATP through an activated phospho-Asp-tRNA(Asn) or phospho-Glu-tRNA(Gln). The protein is Aspartyl/glutamyl-tRNA(Asn/Gln) amidotransferase subunit B of Macrococcus caseolyticus (strain JCSC5402) (Macrococcoides caseolyticum).